The primary structure comprises 203 residues: FMN-dependent NADH:quinone oxidoreductase 1 (203 aa).

Residues Ser9, Ser15–Ser17, Met95–Phe98, and Thr139–Gly142 contribute to the FMN site.

This sequence belongs to the azoreductase type 1 family. As to quaternary structure, homodimer. Requires FMN as cofactor.

The catalysed reaction is 2 a quinone + NADH + H(+) = 2 a 1,4-benzosemiquinone + NAD(+). The enzyme catalyses N,N-dimethyl-1,4-phenylenediamine + anthranilate + 2 NAD(+) = 2-(4-dimethylaminophenyl)diazenylbenzoate + 2 NADH + 2 H(+). Its function is as follows. Quinone reductase that provides resistance to thiol-specific stress caused by electrophilic quinones. In terms of biological role, also exhibits azoreductase activity. Catalyzes the reductive cleavage of the azo bond in aromatic azo compounds to the corresponding amines. The chain is FMN-dependent NADH:quinone oxidoreductase 1 from Pseudomonas putida (strain ATCC 47054 / DSM 6125 / CFBP 8728 / NCIMB 11950 / KT2440).